We begin with the raw amino-acid sequence, 314 residues long: GTP cyclohydrolase FolE2 (314 aa).

The interval 290-314 is disordered; it reads DASAWSAPQASAPDQQESFATGNER. Low complexity predominate over residues 291–305; sequence ASAWSAPQASAPDQQ.

It belongs to the GTP cyclohydrolase IV family.

The enzyme catalyses GTP + H2O = 7,8-dihydroneopterin 3'-triphosphate + formate + H(+). It functions in the pathway cofactor biosynthesis; 7,8-dihydroneopterin triphosphate biosynthesis; 7,8-dihydroneopterin triphosphate from GTP: step 1/1. Its function is as follows. Converts GTP to 7,8-dihydroneopterin triphosphate. The protein is GTP cyclohydrolase FolE2 of Pseudomonas putida (strain ATCC 700007 / DSM 6899 / JCM 31910 / BCRC 17059 / LMG 24140 / F1).